A 177-amino-acid chain; its full sequence is Large ribosomal subunit protein uL22 (177 aa).

Residues 118 to 177 (VESRPSREGRRGGAGESAGGARARRAQGSKAAAAKKAPASSSTKAATTTEASEEAKGGSQ) are disordered. The segment covering 121–130 (RPSREGRRGG) has biased composition (basic and acidic residues). The segment covering 145–167 (GSKAAAAKKAPASSSTKAATTTE) has biased composition (low complexity).

This sequence belongs to the universal ribosomal protein uL22 family. Part of the 50S ribosomal subunit.

Functionally, this protein binds specifically to 23S rRNA; its binding is stimulated by other ribosomal proteins, e.g. L4, L17, and L20. It is important during the early stages of 50S assembly. It makes multiple contacts with different domains of the 23S rRNA in the assembled 50S subunit and ribosome. Its function is as follows. The globular domain of the protein is located near the polypeptide exit tunnel on the outside of the subunit, while an extended beta-hairpin is found that lines the wall of the exit tunnel in the center of the 70S ribosome. The protein is Large ribosomal subunit protein uL22 of Mycobacterium sp. (strain JLS).